Consider the following 309-residue polypeptide: Glycine-rich RNA-binding protein 3, mitochondrial (309 aa).

The transit peptide at 1-37 directs the protein to the mitochondrion; that stretch reads MAFLSKFGNILKQTTNKQLNAQVSLSSPSLFQAIRCM. Residues 40 to 118 form the RRM domain; the sequence is SKLFIGGMAY…RVVKVNYAND (79 aa). Positions 247 to 309 are disordered; sequence FAGDSQFGGS…GEFEDVAKRA (63 aa). Residues 258 to 273 are compositionally biased toward polar residues; the sequence is VGNSSQFGGDNTQFTA.

It belongs to the GR-RBP family. In terms of assembly, homodimer. Interacts with ORRM2 and MORF8/RIP1. Interacts with RBG5/ORRM4. Binds to RBG2/ORRM5.

The protein localises to the mitochondrion. Possibly has a role in RNA transcription or processing during stress. Involved in C-to-U editing of mitochondrial RNA. Functions as a minor mitochondrial editing factor. Controls 6 percent of the mitochondrial editing sites. In Arabidopsis thaliana (Mouse-ear cress), this protein is Glycine-rich RNA-binding protein 3, mitochondrial.